Here is a 391-residue protein sequence, read N- to C-terminus: 4-hydroxy-3-methylbut-2-en-1-yl diphosphate synthase (flavodoxin) (391 aa).

[4Fe-4S] cluster is bound by residues Cys286, Cys289, Cys321, and Glu328.

Belongs to the IspG family. [4Fe-4S] cluster is required as a cofactor.

It catalyses the reaction (2E)-4-hydroxy-3-methylbut-2-enyl diphosphate + oxidized [flavodoxin] + H2O + 2 H(+) = 2-C-methyl-D-erythritol 2,4-cyclic diphosphate + reduced [flavodoxin]. The protein operates within isoprenoid biosynthesis; isopentenyl diphosphate biosynthesis via DXP pathway; isopentenyl diphosphate from 1-deoxy-D-xylulose 5-phosphate: step 5/6. Converts 2C-methyl-D-erythritol 2,4-cyclodiphosphate (ME-2,4cPP) into 1-hydroxy-2-methyl-2-(E)-butenyl 4-diphosphate. The polypeptide is 4-hydroxy-3-methylbut-2-en-1-yl diphosphate synthase (flavodoxin) (Corynebacterium diphtheriae (strain ATCC 700971 / NCTC 13129 / Biotype gravis)).